The chain runs to 107 residues: Anti-adapter protein IraM (107 aa).

The protein belongs to the IraM/RssC family.

Its subcellular location is the cytoplasm. Its function is as follows. Inhibits RpoS proteolysis by regulating RssB activity, thereby increasing the stability of the sigma stress factor RpoS during magnesium starvation. The chain is Anti-adapter protein IraM from Shigella sonnei (strain Ss046).